Here is a 384-residue protein sequence, read N- to C-terminus: N-acetyldiaminopimelate deacetylase (384 aa).

Asp-73 is a catalytic residue. Glu-132 (proton acceptor) is an active-site residue.

Belongs to the peptidase M20A family. N-acetyldiaminopimelate deacetylase subfamily.

It catalyses the reaction N-acetyl-(2S,6S)-2,6-diaminopimelate + H2O = (2S,6S)-2,6-diaminopimelate + acetate. Its pathway is amino-acid biosynthesis; L-lysine biosynthesis via DAP pathway; LL-2,6-diaminopimelate from (S)-tetrahydrodipicolinate (acetylase route): step 3/3. Its function is as follows. Catalyzes the conversion of N-acetyl-diaminopimelate to diaminopimelate and acetate. The protein is N-acetyldiaminopimelate deacetylase of Limosilactobacillus fermentum (strain NBRC 3956 / LMG 18251) (Lactobacillus fermentum).